A 121-amino-acid chain; its full sequence is MLLSNKIKHSIFQFFVFPFYYFLLIITEIGFSSCIQYSGLSAYFPIKCTLSLLSSPIRRVQVISDSLNVKGKRLLLVVTAHSRLRVNADIGGLISNIGCGKRPTILSTVNTGSNTSREGKS.

The chain crosses the membrane as a helical span at residues 11 to 31; that stretch reads IFQFFVFPFYYFLLIITEIGF.

The protein resides in the membrane. This is an uncharacterized protein from Schizosaccharomyces pombe (strain 972 / ATCC 24843) (Fission yeast).